A 105-amino-acid chain; its full sequence is Platelet factor 4 (105 aa).

The first 29 residues, 1–29 (MSAAAVFRGLRPSPELLLLGLLLLPAVVA), serve as a signal peptide directing secretion. An O-linked (GalNAc...) threonine; partial glycan is attached at Thr31. Intrachain disulfides connect Cys44–Cys71 and Cys46–Cys87. The residue at position 61 (Ser61) is a Phosphoserine. Heparin is bound at residue 96–102 (KKIIKKL).

The protein belongs to the intercrine alpha (chemokine CxC) family. As to quaternary structure, homotetramer. Interacts with TNFAIP6 (via Link domain). Interacts with CCR1. Interacts with CXCR3. Interacts with THBD; this interaction enhances generation of activated protein C. O-linked glycan consists of Gal-GalNAc disaccharide which is modified with sialic acid residues (microheterogeneity).

It is found in the secreted. In terms of biological role, chemokine released during platelet aggregation that plays a role in different biological processes including hematopoiesis, cell proliferation, differentiation, and activation. Acts via different functional receptors including CCR1, CXCR3A or CXCR3B. Upon interaction with CXCR3A receptor, induces activated T-lymphocytes migration mediated via downstream Ras/extracellular signal-regulated kinase (ERK) signaling. Neutralizes the anticoagulant effect of heparin by binding more strongly to heparin than to the chondroitin-4-sulfate chains of the carrier molecule. Plays a role in the inhibition of hematopoiesis and in the maintenance of hematopoietic stem cell (HSC) quiescence. Chemotactic for neutrophils and monocytes via CCR1. Inhibits endothelial cell proliferation. In cooperation with toll-like receptor 8/TLR8, induces chromatin remodeling and activates inflammatory gene expression via the TBK1-IRF5 axis. In addition, induces myofibroblast differentiation and collagen synthesis in different precursor cells, including endothelial cells, by stimulating endothelial-to-mesenchymal transition. Interacts with thrombomodulin/THBD to enhance the activation of protein C and thus potentiates its anticoagulant activity. This Rattus norvegicus (Rat) protein is Platelet factor 4 (Pf4).